The following is a 366-amino-acid chain: D-alanine--D-alanine ligase (366 aa).

Positions 149–358 constitute an ATP-grasp domain; the sequence is KIAFDHAGLP…FSELVDTLIQ (210 aa). 185–240 is a binding site for ATP; sequence ETTLEYPCFVKPANLGSSVGIAKVRSRSELETALDNAASYDRRIIVEAGVEAKELE. Mg(2+) is bound by residues Asp311, Glu325, and Asn327.

Belongs to the D-alanine--D-alanine ligase family. Mg(2+) is required as a cofactor. The cofactor is Mn(2+).

It is found in the cytoplasm. It catalyses the reaction 2 D-alanine + ATP = D-alanyl-D-alanine + ADP + phosphate + H(+). Its pathway is cell wall biogenesis; peptidoglycan biosynthesis. Functionally, cell wall formation. The protein is D-alanine--D-alanine ligase of Trichodesmium erythraeum (strain IMS101).